The sequence spans 297 residues: Ubiquinone biosynthesis protein COQ4, mitochondrial (297 aa).

Residues 1 to 54 constitute a mitochondrion transit peptide; that stretch reads MLSSARARLPISLCSFSLPFARLPNTLSRYQETWQRLPGRTHPTRSIRTTPAYE. Residues histidine 178, aspartate 179, histidine 182, and glutamate 194 each coordinate Zn(2+).

This sequence belongs to the COQ4 family. In terms of assembly, component of a multi-subunit COQ enzyme complex, composed of at least COQ3, COQ4, COQ5, COQ6, COQ7 and COQ9. The cofactor is Zn(2+).

It localises to the mitochondrion inner membrane. The catalysed reaction is a 4-hydroxy-3-methoxy-5-(all-trans-polyprenyl)benzoate + H(+) = a 2-methoxy-6-(all-trans-polyprenyl)phenol + CO2. The protein operates within cofactor biosynthesis; ubiquinone biosynthesis. Functionally, lyase that catalyzes the C1-decarboxylation of 4-hydroxy-3-methoxy-5-(all-trans-polyprenyl)benzoic acid into 2-methoxy-6-(all-trans-polyprenyl)phenol during ubiquinone biosynthesis. The polypeptide is Ubiquinone biosynthesis protein COQ4, mitochondrial (Laccaria bicolor (strain S238N-H82 / ATCC MYA-4686) (Bicoloured deceiver)).